Reading from the N-terminus, the 204-residue chain is Double homeobox protein A (204 aa).

Residues 15-74 constitute a DNA-binding region (homeobox 1); that stretch reads HRRCRTKFTEEQLKILINTFNQKPYPGYATKQKLALEINTEESRIQIWFQNRRARHGFQK. Disordered regions lie at residues 73–101 and 163–204; these read QKRP…SREA and EPVA…ARTW. A compositionally biased stretch (polar residues) spans 81 to 90; sequence LESSQSQGQD. A DNA-binding region (homeobox 2) is located at residues 101-160; it reads ARRCRTTYSASQLHTLIKAFMKNPYPGIDSREELAKEIGVPESRVQIWFQNRRSRLLLQR. The span at 184–197 shows a compositional bias: polar residues; sequence EDTQNGTNFTSDSH.

This sequence belongs to the paired homeobox family. Expressed in embryonic stem cells.

The protein localises to the nucleus. In terms of biological role, transcription factor that acts as a repressor. In Homo sapiens (Human), this protein is Double homeobox protein A.